The sequence spans 261 residues: Neurexophilin-2 (261 aa).

The first 22 residues, 1–22, serve as a signal peptide directing secretion; that stretch reads MSLRPLPLLVVPGLLQLLFCDS. Residues 23 to 87 form an II region; that stretch reads EEVIHNTESV…WDWLANITEI (65 aa). N-linked (GlcNAc...) asparagine glycosylation is found at asparagine 83, asparagine 136, asparagine 146, and asparagine 152. The III stretch occupies residues 88 to 166; it reads QEQLARTKRR…LVPPSKVVEF (79 aa). The segment at 167–175 is IV (linker domain); the sequence is EISPQSTLE. Positions 176–261 are v (Cys-rich); that stretch reads TKESKSFNCH…HSETPYLSFG (86 aa).

Belongs to the neurexophilin family. May be proteolytically processed at the boundary between the N-terminal non-conserved and the central conserved domain in neuron-like cells.

The protein localises to the secreted. Functionally, may be signaling molecules that resemble neuropeptides and that act by binding to alpha-neurexins and possibly other receptors. The sequence is that of Neurexophilin-2 (Nxph2) from Mus musculus (Mouse).